A 316-amino-acid chain; its full sequence is Delta(1)-pyrroline-2-carboxylate reductase (316 aa).

This sequence belongs to the ornithine cyclodeaminase/mu-crystallin family. In terms of assembly, homodimer.

It carries out the reaction L-proline + NAD(+) = 1-pyrroline-2-carboxylate + NADH + H(+). The catalysed reaction is L-proline + NADP(+) = 1-pyrroline-2-carboxylate + NADPH + H(+). Its function is as follows. Catalyzes the reduction of Delta(1)-pyrroline-2-carboxylate (Pyr2C) to L-proline, using preferentially NADPH over NADH as the electron donor. Together with LhpH, is involved in a metabolic pathway that converts trans-3-hydroxy-L-proline (t3LHyp) to L-proline. To a much lesser extent, can also reduce Delta(1)-piperideine-2-carboxylate (Pip2C) to L-pipecolate in vitro; however, this activity has likely no physiological significance in vivo since C.psychrerythraea probably possesses no ability to metabolize D-lysine via the L-pipecolate pathway. Does not show ornithine cyclodeaminase (OCD) activity. This chain is Delta(1)-pyrroline-2-carboxylate reductase, found in Colwellia psychrerythraea (strain 34H / ATCC BAA-681) (Vibrio psychroerythus).